The primary structure comprises 271 residues: Structure-specific endonuclease subunit SLX1 (271 aa).

The 86-residue stretch at 9 to 94 (RFFGVYLLYC…PQASRRLTHV (86 aa)) folds into the GIY-YIG domain. The SLX1-type zinc-finger motif lies at 182-234 (CTLCARMLQDEEGPLCCPHPGCPLRAHIICLAEEFLQEEPGQLLPLEGHCPSC).

Belongs to the SLX1 family. Forms a heterodimer with SLX4. The cofactor is a divalent metal cation.

The protein resides in the nucleus. Functionally, catalytic subunit of the SLX1-SLX4 structure-specific endonuclease that resolves DNA secondary structures generated during DNA repair and recombination. Has endonuclease activity towards branched DNA substrates, introducing single-strand cuts in duplex DNA close to junctions with ss-DNA. Has a preference for 5'-flap structures, and promotes symmetrical cleavage of static and migrating Holliday junctions (HJs). Resolves HJs by generating two pairs of ligatable, nicked duplex products. The sequence is that of Structure-specific endonuclease subunit SLX1 (Slx1b) from Rattus norvegicus (Rat).